Here is a 195-residue protein sequence, read N- to C-terminus: Transcriptional regulator LdrP (195 aa).

Residues 110-182 (GELRARIARY…YRRVYLLDLA (73 aa)) enclose the HTH crp-type domain. The H-T-H motif DNA-binding region spans 142-161 (HEEIADATASIRESVSKVLA).

In terms of biological role, activates transcription. Positively regulates PcrtB promoter upstream of the crtB operon in a cAMP-independent manner. Regulated genes include genes encoding DNA photolyase, phytoene synthase and cytochrome P450 monooxygenase, which are involved in carotenoid biosynthesis. Positively regulates the light-inducible gene cluster in the megaplasmid in a cAMP-independent manner. The sequence is that of Transcriptional regulator LdrP from Thermus thermophilus (strain ATCC BAA-163 / DSM 7039 / HB27).